The following is a 687-amino-acid chain: ERI1 exoribonuclease 2 (687 aa).

Residues 38–226 (LIIIDFESTC…DDSRNTAKLA (189 aa)) form the Exonuclease domain. 3 residues coordinate Mg(2+): Asp42, Glu44, and Asp156. Glu44 functions as the Proton acceptor in the catalytic mechanism. Residue Glu44 coordinates AMP. His213 acts as the Proton acceptor in catalysis. His213 is an AMP binding site. Residue Asp218 coordinates Mg(2+). Positions 595, 597, 620, and 633 each coordinate Zn(2+). Residues 595–642 (CNCGRRAKRLTVSNAGPNQGKAFYTCSVKKRNEENKKGCDYFKWEQTV) form a GRF-type zinc finger.

The protein belongs to the ERI2 family. Mg(2+) serves as cofactor.

In Xenopus laevis (African clawed frog), this protein is ERI1 exoribonuclease 2 (eri2).